The primary structure comprises 428 residues: Serine--tRNA ligase (428 aa).

T231–E233 serves as a coordination point for L-serine. R262–E264 serves as a coordination point for ATP. Residue E285 coordinates L-serine. An ATP-binding site is contributed by E349–S352. L-serine is bound at residue S385.

This sequence belongs to the class-II aminoacyl-tRNA synthetase family. Type-1 seryl-tRNA synthetase subfamily. As to quaternary structure, homodimer. The tRNA molecule binds across the dimer.

It localises to the cytoplasm. It catalyses the reaction tRNA(Ser) + L-serine + ATP = L-seryl-tRNA(Ser) + AMP + diphosphate + H(+). The enzyme catalyses tRNA(Sec) + L-serine + ATP = L-seryl-tRNA(Sec) + AMP + diphosphate + H(+). The protein operates within aminoacyl-tRNA biosynthesis; selenocysteinyl-tRNA(Sec) biosynthesis; L-seryl-tRNA(Sec) from L-serine and tRNA(Sec): step 1/1. Catalyzes the attachment of serine to tRNA(Ser). Is also able to aminoacylate tRNA(Sec) with serine, to form the misacylated tRNA L-seryl-tRNA(Sec), which will be further converted into selenocysteinyl-tRNA(Sec). In Staphylococcus aureus (strain bovine RF122 / ET3-1), this protein is Serine--tRNA ligase.